The chain runs to 1194 residues: Immunoglobulin superfamily member 3 (1194 aa).

The N-terminal stretch at 1-19 is a signal peptide; it reads MKCFFPVLSCLAVLGVVSA. 8 consecutive Ig-like C2-type domains span residues 20 to 138, 143 to 262, 276 to 386, 401 to 539, 545 to 661, 676 to 803, 813 to 945, and 949 to 1097; these read QRQV…AKMN, PDSL…WYAM, PTDK…KTVT, PIIV…ISIT, FAVT…WTRL, PVTK…EEVS, PDSR…TALT, and PDAS…YRLT. Over 20-1124 the chain is Extracellular; sequence QRQVTVQEGP…LQSIICSNDA (1105 aa). Intrachain disulfides connect C42–C120 and C167–C246. An N-linked (GlcNAc...) asparagine glycan is attached at N43. An EWI motif motif is present at residues 250-252; it reads EWI. A disulfide bond links C302 and C376. The N-linked (GlcNAc...) asparagine glycan is linked to N418. 2 disulfides stabilise this stretch: C432/C511 and C566/C645. Residue N655 is glycosylated (N-linked (GlcNAc...) asparagine). 3 disulfide bridges follow: C701/C782, C838/C918, and C974/C1080. A glycan (N-linked (GlcNAc...) asparagine) is linked at N842. The disordered stretch occupies residues 997–1033; that stretch reads AGGKRSSPGLEEQEEEREEEEEEDDDDDDDPTERTAL. The segment covering 1007–1027 has biased composition (acidic residues); that stretch reads EEQEEEREEEEEEDDDDDDDP. N1077 is a glycosylation site (N-linked (GlcNAc...) asparagine). Residues 1125–1145 traverse the membrane as a helical segment; sequence LFYFVFFYPFPIFGILIITIL. Residues 1146 to 1194 are Cytoplasmic-facing; the sequence is LVRFKSRNSSKNSDGKNGVPLLWIKEPHLNYSPTCLEPPVLSIHPGAID.

As to expression, expressed in a wide range of tissues with High expression in Placenta, kidney and lung.

The protein localises to the membrane. In Homo sapiens (Human), this protein is Immunoglobulin superfamily member 3 (IGSF3).